The sequence spans 346 residues: Isopentenyl-diphosphate delta-isomerase (346 aa).

9–10 (RK) contributes to the substrate binding site. FMN-binding positions include S67, 68-70 (SMT), S98, and N127. 98–100 (SQR) is a substrate binding site. Substrate is bound at residue Q162. Mg(2+) is bound at residue E163. FMN is bound by residues K194, T224, 274-276 (GIR), and 295-296 (AA).

Belongs to the IPP isomerase type 2 family. As to quaternary structure, homooctamer. Dimer of tetramers. It depends on FMN as a cofactor. NADPH is required as a cofactor. Requires Mg(2+) as cofactor.

The protein localises to the cytoplasm. The enzyme catalyses isopentenyl diphosphate = dimethylallyl diphosphate. Its function is as follows. Involved in the biosynthesis of isoprenoids. Catalyzes the 1,3-allylic rearrangement of the homoallylic substrate isopentenyl (IPP) to its allylic isomer, dimethylallyl diphosphate (DMAPP). This is Isopentenyl-diphosphate delta-isomerase from Stutzerimonas stutzeri (strain A1501) (Pseudomonas stutzeri).